The primary structure comprises 512 residues: Allene oxide synthase 1, chloroplastic (512 aa).

Residues 1–25 constitute a chloroplast transit peptide; sequence MATAAACISFASPSPARVVIRRQTR. The tract at residues 23–43 is disordered; sequence QTRASASASATDRQEVVSPKR. Lys127, His158, and Lys162 together coordinate heme b. Asn315 contributes to the (13S)-hydroperoxy-(9Z,11E,15Z)-octadecatrienoate binding site. Lys463 and Cys465 together coordinate heme b.

Belongs to the cytochrome P450 family. The cofactor is heme b. Expressed in coleoptiles, and at lower level in leaves of dark-grown seedlings.

It is found in the plastid. Its subcellular location is the chloroplast membrane. The enzyme catalyses (13S)-hydroperoxy-(9Z,11E,15Z)-octadecatrienoate = (9Z,13S,15Z)-12,13-epoxyoctadeca-9,11,15-trienoate + H2O. The protein operates within lipid metabolism; oxylipin biosynthesis. Involved in the biosynthesis of jasmonic acid, a growth regulator that is implicated also as a signaling molecule in plant defense. Converts 13-hydroperoxylinolenic acid to 12,13-epoxylinolenic acid. The chain is Allene oxide synthase 1, chloroplastic (CYP74A1) from Oryza sativa subsp. japonica (Rice).